The chain runs to 176 residues: Mitochondrial inner membrane protein Mpv17 (176 aa).

Transmembrane regions (helical) follow at residues 18 to 38 (VQVL…QQLV), 53 to 73 (TMAS…YRVL), 94 to 114 (GGFA…LNGL), and 131 to 151 (LITN…LVPL).

It belongs to the peroxisomal membrane protein PXMP2/4 family.

The protein localises to the mitochondrion inner membrane. Its function is as follows. Non-selective channel that modulates the membrane potential under normal conditions and oxidative stress, and is involved in mitochondrial homeostasis. Involved in mitochondrial deoxynucleoside triphosphates (dNTP) pool homeostasis and mitochondrial DNA (mtDNA) maintenance. May be involved in the regulation of reactive oxygen species metabolism and the control of oxidative phosphorylation. In Bos taurus (Bovine), this protein is Mitochondrial inner membrane protein Mpv17.